Consider the following 186-residue polypeptide: Biphenyl dioxygenase subunit beta (186 aa).

The protein belongs to the bacterial ring-hydroxylating dioxygenase beta subunit family. Heterohexamer consisting of 3 BphA subunits and 3 BphE subunits. A ferredoxin (BphF) and a ferredoxin reductase (BphG) must be present to obtain activity.

It catalyses the reaction biphenyl + NADH + O2 + H(+) = (2R,3S)-3-phenylcyclohexa-3,5-diene-1,2-diol + NAD(+). The protein operates within xenobiotic degradation; biphenyl degradation; 2-hydroxy-2,4-pentadienoate and benzoate from biphenyl: step 1/4. Its function is as follows. The beta subunit may be responsible for the substrate specificity of the enzyme. The protein is Biphenyl dioxygenase subunit beta (bphE) of Comamonas testosteroni (Pseudomonas testosteroni).